Reading from the N-terminus, the 674-residue chain is DNA ligase (674 aa).

NAD(+)-binding positions include 42–46, 91–92, and Glu-121; these read DNVYD and SM. Residue Lys-123 is the N6-AMP-lysine intermediate of the active site. Positions 144, 178, 294, and 318 each coordinate NAD(+). Cys-412, Cys-415, Cys-430, and Cys-435 together coordinate Zn(2+). The region spanning 596 to 674 is the BRCT domain; sequence VKDSFVAGKT…ETELLANLKD (79 aa).

This sequence belongs to the NAD-dependent DNA ligase family. LigA subfamily. It depends on Mg(2+) as a cofactor. The cofactor is Mn(2+).

The enzyme catalyses NAD(+) + (deoxyribonucleotide)n-3'-hydroxyl + 5'-phospho-(deoxyribonucleotide)m = (deoxyribonucleotide)n+m + AMP + beta-nicotinamide D-nucleotide.. DNA ligase that catalyzes the formation of phosphodiester linkages between 5'-phosphoryl and 3'-hydroxyl groups in double-stranded DNA using NAD as a coenzyme and as the energy source for the reaction. It is essential for DNA replication and repair of damaged DNA. This Lacticaseibacillus casei (strain BL23) (Lactobacillus casei) protein is DNA ligase.